We begin with the raw amino-acid sequence, 369 residues long: Peptide chain release factor 2 (369 aa).

The residue at position 249 (Gln-249) is an N5-methylglutamine.

This sequence belongs to the prokaryotic/mitochondrial release factor family. Post-translationally, methylated by PrmC. Methylation increases the termination efficiency of RF2.

It localises to the cytoplasm. In terms of biological role, peptide chain release factor 2 directs the termination of translation in response to the peptide chain termination codons UGA and UAA. This Corynebacterium diphtheriae (strain ATCC 700971 / NCTC 13129 / Biotype gravis) protein is Peptide chain release factor 2.